Here is an 876-residue protein sequence, read N- to C-terminus: MSKSTAEIRQAFLDFFHSKGHQVVASSSLVPHNDPTLLFTNAGMNQFKDVFLGLDKRNYSRATTSQRCVRAGGKHNDLENVGYTARHHTFFEMLGNFSFGDYFKHDAIQFAWELLTSEKWFALPKERLWVTVYESDDEAYEIWEKEVGIPRERIIRIGDNKGAPYASDNFWQMGDTGPCGPCTEIFYDHGDHIWGGPPGSPEEDGDRYIEIWNIVFMQFNRQADGTMEPLPKPSVDTGMGLERIAAVLQHVNSNYDIDLFRTLIQAVAKVTGATDLSNKSLRVIADHIRSCAFLIADGVMPSNENRGYVLRRIIRRAVRHGNMLGAKETFFYKLVGPLIDVMGSAGEDLKRQQAQVEQVLKTEEEQFARTLERGLALLDEELAKLSGDTLDGETAFRLYDTYGFPVDLTADVCRERNIKVDEAGFEAAMEEQRRRAREASGFGADYNAMIRVDSASEFKGYDHLELNGKVTALFVDGKAVDAINAGQEAVVVLDQTPFYAESGGQVGDKGELKGANFSFAVEDTQKYGQAIGHIGKLAAGSLKVGDAVQADVDEARRARIRLNHSATHLMHAALRQVLGTHVSQKGSLVNDKVLRFDFSHNEAMKPEEIRAVEDLVNAQIRRNLPIETNIMDLEAAKAKGAMALFGEKYDERVRVLSMGDFSTELCGGTHASRTGDIGLFRIISESGTAAGVRRIEAVTGEGAIATVHADSERLSEVAHLLKGDSNNLADKVRSVLERTRQLEKELQQLKEQAAAQESANLSSKAIDVNGVKLLVSELSGVEPKMLRTMVDDLKNQLGSTIIVLATVAEGKVSLIAGVSKDVTDRVKAGELIGMVAQQVGGKGGGRPDMAQAGGTDAAALPAALASVKGWVSAKLQ.

Residue Lys74 is modified to N6-acetyllysine. Residues His564, His568, Cys666, and His670 each contribute to the Zn(2+) site.

Belongs to the class-II aminoacyl-tRNA synthetase family. In terms of assembly, homotetramer. Zn(2+) serves as cofactor.

Its subcellular location is the cytoplasm. It carries out the reaction tRNA(Ala) + L-alanine + ATP = L-alanyl-tRNA(Ala) + AMP + diphosphate. In terms of biological role, catalyzes the attachment of alanine to tRNA(Ala) in a two-step reaction: alanine is first activated by ATP to form Ala-AMP and then transferred to the acceptor end of tRNA(Ala). Also edits incorrectly charged Ser-tRNA(Ala) and Gly-tRNA(Ala) via its editing domain. The chain is Alanine--tRNA ligase from Escherichia coli O6:K15:H31 (strain 536 / UPEC).